Reading from the N-terminus, the 132-residue chain is MKSSGLFPFLVLLALGTLAPWAVEGSGKSFKAGVCPPKKSAQCLRYKKPECQSDWQCPGKKRCCPDTCGIKCLDPVDTPNPTRRKPGKCPVTYGQCLMLNPPNFCEMDGQCKRDLKCCMGMCGKSCVSPVKA.

A signal peptide spans 1 to 25 (MKSSGLFPFLVLLALGTLAPWAVEG). 2 WAP domains span residues 28–76 (KSFK…LDPV) and 82–130 (TRRK…VSPV). 8 disulfides stabilise this stretch: Cys-35–Cys-64, Cys-43–Cys-68, Cys-51–Cys-63, Cys-57–Cys-72, Cys-89–Cys-118, Cys-96–Cys-122, Cys-105–Cys-117, and Cys-111–Cys-126. The interval 84 to 132 (RKPGKCPVTYGQCLMLNPPNFCEMDGQCKRDLKCCMGMCGKSCVSPVKA) is elastase inhibitory domain.

As to quaternary structure, interacts with GRN; interaction protects progranulin from proteolysis. Detected in blood plasma. Detected in bone marrow myeloid cells. Detected in airway sputum. Detected in parotid gland secretions. Detected in seminal plasma (at protein level). Detected in uterus cervix.

Its subcellular location is the secreted. In terms of biological role, acid-stable proteinase inhibitor with strong affinities for trypsin, chymotrypsin, elastase, and cathepsin G. Modulates the inflammatory and immune responses after bacterial infection, and after infection by the intracellular parasite L.major. Down-regulates responses to bacterial lipopolysaccharide (LPS). Plays a role in regulating the activation of NF-kappa-B and inflammatory responses. Has antimicrobial activity against mycobacteria, but not against salmonella. Contributes to normal resistance against infection by M.tuberculosis. Required for normal resistance to infection by L.major. Required for normal wound healing, probably by preventing tissue damage by limiting protease activity. Together with ELANE, required for normal differentiation and proliferation of bone marrow myeloid cells. In Homo sapiens (Human), this protein is Antileukoproteinase (SLPI).